A 577-amino-acid polypeptide reads, in one-letter code: Probable ATP-dependent RNA helicase DDX55 homolog (577 aa).

The Q motif signature appears at 7-37 (AVATKTYREKLGPEILEVFDKSYKSFTDVQV). One can recognise a Helicase ATP-binding domain in the interval 40–218 (GTHLLNLSDV…VFGLRNAKQV (179 aa)). 53–60 (SPTGSGKT) is an ATP binding site. The DEAD box signature appears at 166–169 (DEAD). A Helicase C-terminal domain is found at 231-393 (TLKNYFVECP…EVKVPTSTSR (163 aa)). Positions 508 to 577 (AKEKKRREKE…LSKKEIKDVL (70 aa)) are disordered. Residues 510-530 (EKKRREKEARKMKRAGGRFKS) are compositionally biased toward basic residues.

This sequence belongs to the DEAD box helicase family. DDX55/SPB4 subfamily.

It carries out the reaction ATP + H2O = ADP + phosphate + H(+). Probable ATP-binding RNA helicase. In Caenorhabditis briggsae, this protein is Probable ATP-dependent RNA helicase DDX55 homolog.